The sequence spans 215 residues: Ras-related protein Rab-5A (215 aa).

Residues serine 29, alanine 30, glycine 32, lysine 33, serine 34, serine 35, histidine 46, glutamate 47, threonine 52, and glycine 78 each coordinate GTP. Residue serine 34 coordinates Mg(2+). 2 short sequence motifs (switch) span residues 44-56 (QFHE…IGAA) and 77-93 (AGQE…YRGA). Threonine 52 lines the Mg(2+) pocket. Serine 84 carries the phosphoserine modification. Residues asparagine 133, lysine 134, aspartate 136, alanine 164, and lysine 165 each coordinate GTP. The interval 185 to 215 (EPQNPGINCTRGRGVDLTEPTQPTRSQCCSN) is disordered. Polar residues predominate over residues 203 to 215 (EPTQPTRSQCCSN). Residues cysteine 212 and cysteine 213 are each lipidated (S-geranylgeranyl cysteine).

This sequence belongs to the small GTPase superfamily. Rab family. As to quaternary structure, interacts with GDI1; this promotes dissociation from membranes; phosphorylation at Ser-84 disrupts this interaction. Interacts with GDI2; phosphorylation at Ser-84 disrupts the interaction. Interacts with SGSM1 and SGSM3. Interacts with PIK3CB. Interacts with RIN1 and GAPVD1, which regulate its pathway, probably by acting as a GEF. Interacts with RINL. Interacts with ALS2CL, SUN2, ZFYVE20 and RUFY1. Interacts with RABEP1; one RABEP1 homodimer binds two RAB5A chains, but at opposite sides of the dimer. Interacts with OCRL and INPP5F. May be a component of a complex composed of RAB5A, DYN2 and PIK3C3. Does not interact with the BLOC-3 complex (heterodimer of HPS1 and HPS4). Interacts with CLN5. Interacts with APPL2. Interacts with F8A1/F8A2/F8A3. Found in a complex with F8A1/F8A2/F8A3, HTT and RAB5A; mediates the recruitment of HTT by RAB5A onto early endosomes. Interacts with ATP9A. Interacts with PPP1R21; mediates the recruitment of FERRY complex by RAB5A onto early endosomes. Requires Mg(2+) as cofactor. Phosphorylation of Ser-84 in the switch II region by LRRK2 prevents the association of RAB regulatory proteins, including RAB GDP dissociation inhibitors GDI1 and GDI2.

The protein localises to the cell membrane. Its subcellular location is the early endosome membrane. It localises to the melanosome. The protein resides in the cytoplasmic vesicle. It is found in the cell projection. The protein localises to the ruffle. Its subcellular location is the membrane. It localises to the cytoplasm. The protein resides in the cytosol. It is found in the phagosome membrane. The protein localises to the endosome membrane. It catalyses the reaction GTP + H2O = GDP + phosphate + H(+). Regulated by guanine nucleotide exchange factors (GEFs) including RINL, which promote the exchange of bound GDP for free GTP. Regulated by GTPase activating proteins (GAPs) which increase the GTP hydrolysis activity. Inhibited by GDP dissociation inhibitors (GDIs). Its function is as follows. The small GTPases Rab are key regulators of intracellular membrane trafficking, from the formation of transport vesicles to their fusion with membranes. Rabs cycle between an inactive GDP-bound form and an active GTP-bound form that is able to recruit to membranes different sets of downstream effectors directly responsible for vesicle formation, movement, tethering and fusion. RAB5A is required for the fusion of plasma membranes and early endosomes. Contributes to the regulation of filopodia extension. Required for the exosomal release of SDCBP, CD63, PDCD6IP and syndecan. Regulates maturation of apoptotic cell-containing phagosomes, probably downstream of DYN2 and PIK3C3. In Sus scrofa (Pig), this protein is Ras-related protein Rab-5A (RAB5A).